The chain runs to 719 residues: Solute carrier organic anion transporter family member 6A1 (719 aa).

Positions 1–46 (MFVGVARHSGSQDEVSRGVEPLEAARAQPAKDRRAKGTPKSSKPGK) are disordered. Over 1-106 (MFVGVARHSG…TCCECCNNIR (106 aa)) the chain is Cytoplasmic. A compositionally biased stretch (basic residues) spans 33-46 (RRAKGTPKSSKPGK). The chain crosses the membrane as a helical span at residues 107 to 126 (CFMIFYCILLICQGVVFGLI). Residues 127-145 (DVSIGDFQKEYQLKTIEKL) lie on the Extracellular side of the membrane. The chain crosses the membrane as a helical span at residues 146 to 166 (ALEKSYDISSGLVAIFIAFYG). The Cytoplasmic portion of the chain corresponds to 167–171 (DRKKV). The chain crosses the membrane as a helical span at residues 172-196 (IWFVASSFLIGLGSLLCAFPSINEE). Residues 197–223 (NKQSKVGIEDICEEIKVVSGCQSSGIS) lie on the Extracellular side of the membrane. A helical membrane pass occupies residues 224-254 (FQSKYLSFFILGQTVQGIAGMPLYILGITFI). Residues 255–274 (DENVATHSAGIYLGIAECTS) are Cytoplasmic-facing. A helical transmembrane segment spans residues 275–295 (MIGYALGYVLGAPLVKVPENT). The Extracellular portion of the chain corresponds to 296 to 311 (TSATNTTVNNGSPEWL). Asparagine 300 is a glycosylation site (N-linked (GlcNAc...) asparagine). A helical transmembrane segment spans residues 312-336 (WTWWINFLFAAVVAWCTLIPLSCFP). Residues 337–378 (NNMPGSTRIKARKRKQLHFFDSRLKDLKLGTNIKDLCAALWI) lie on the Cytoplasmic side of the membrane. The chain crosses the membrane as a helical span at residues 379-400 (LMKNPVLICLALSKATEYLVII). The Extracellular portion of the chain corresponds to 401 to 420 (GASEFLPIYLENQFILTPTV). Residues 421 to 444 (ATTLAGLVLIPGGALGQLLGGVIV) traverse the membrane as a helical segment. Topologically, residues 445–448 (STLE) are cytoplasmic. The helical transmembrane segment at 449–472 (MSCKALMRFIMVTSVISLILLVFI) threads the bilayer. At 473-581 (IFVRCNPVQF…DAKCYKLPLF (109 aa)) the chain is on the extracellular side. The Kazal-like domain occupies 496-551 (GNLTAPCNEKCRCSSSIYSSICGRDDIEYFSPCFAGCTYSKAQNQKKMYYNCSCIK). A glycan (N-linked (GlcNAc...) asparagine) is linked at asparagine 497. Disulfide bonds link cysteine 502–cysteine 532, cysteine 508–cysteine 528, and cysteine 517–cysteine 549. N-linked (GlcNAc...) asparagine glycosylation is present at asparagine 546. The chain crosses the membrane as a helical span at residues 582–604 (IAFIFSTLIFSGFSGVPIVLAMT). Residues 605–613 (RVVPDKLRS) lie on the Cytoplasmic side of the membrane. A helical membrane pass occupies residues 614 to 639 (LALGVSYVILRIFGTIPGPSIFKMSG). Topologically, residues 640 to 673 (ETSCILRDVNKCGHTGRCWIYNKTKMAFLLVGIC) are extracellular. A glycan (N-linked (GlcNAc...) asparagine) is linked at asparagine 661. Residues 674–691 (FLCKLCTIIFTTIAFFIY) form a helical membrane-spanning segment. At 692–719 (KRRLNENTDFPDVTVKNPKVKKKEETDL) the chain is on the cytoplasmic side.

This sequence belongs to the organo anion transporter (TC 2.A.60) family. As to expression, strongly expressed in testis. Weakly expressed in spleen, brain, fetal brain and placenta. Detected in lung tumors.

It localises to the cell membrane. This is Solute carrier organic anion transporter family member 6A1 (SLCO6A1) from Homo sapiens (Human).